An 85-amino-acid polypeptide reads, in one-letter code: 4-hydroxyphenylacetate decarboxylase small subunit (85 aa).

Positions 4, 7, 20, 34, 43, 46, 60, and 78 each coordinate [4Fe-4S] cluster.

This sequence belongs to the HPA decarboxylase small subunit family. In terms of assembly, heterooctamer consisting of 4 large (HpdB) subunits and 4 small (HpdC) subunits, arranged as a tetramer of heterodimers. The cofactor is [4Fe-4S] cluster.

The catalysed reaction is 4-hydroxyphenylacetate + H(+) = 4-methylphenol + CO2. The enzyme catalyses 3,4-dihydroxyphenylacetate + H(+) = 4-methylcatechol + CO2. Component of the HPA decarboxylase that decarboxylates phenylacetates with a hydroxyl group in the p-position. Active toward 4-hydroxyphenylacetate and 3,4-dihydroxyphenylacetate, forming 4-methylphenol and 4-methylcatechol, respectively. Is likely involved in the catabolism of aromatic amino acids such as tyrosine fermentation. 4-methylphenol (p-cresol) formation provides metabolic toxicity, which allows an active suppression of other microbes and may provide growth advantages for the producers in highly competitive environments. The small subunit is essential for enzymatic activity of HPA decarboxylase, and also seems to be involved in the regulation of the enzyme oligomeric state and catalytic activity. This is 4-hydroxyphenylacetate decarboxylase small subunit from Clostridioides difficile (strain 630) (Peptoclostridium difficile).